Here is a 413-residue protein sequence, read N- to C-terminus: Na(+)-translocating NADH-quinone reductase subunit B (413 aa).

Transmembrane regions (helical) follow at residues 56–76 (MMIL…YNVG), 123–143 (LLGA…GGFW), and 169–189 (IVPP…GVVI). An FMN phosphoryl threonine modification is found at T236. The next 5 membrane-spanning stretches (helical) occupy residues 270-290 (GSIG…IIFG), 297-317 (IVAG…WIGS), 322-342 (LFAM…GMIF), 358-378 (WWYG…NPAY), and 381-401 (GMML…YVVV).

Belongs to the NqrB/RnfD family. Composed of six subunits; NqrA, NqrB, NqrC, NqrD, NqrE and NqrF. It depends on FMN as a cofactor.

It localises to the cell inner membrane. The catalysed reaction is a ubiquinone + n Na(+)(in) + NADH + H(+) = a ubiquinol + n Na(+)(out) + NAD(+). NQR complex catalyzes the reduction of ubiquinone-1 to ubiquinol by two successive reactions, coupled with the transport of Na(+) ions from the cytoplasm to the periplasm. NqrA to NqrE are probably involved in the second step, the conversion of ubisemiquinone to ubiquinol. This Yersinia pestis protein is Na(+)-translocating NADH-quinone reductase subunit B.